The primary structure comprises 1391 residues: DNA-directed RNA polymerase subunit beta' (1391 aa).

Cys-72, Cys-74, Cys-87, and Cys-90 together coordinate Zn(2+). Residues Asp-462, Asp-464, and Asp-466 each contribute to the Mg(2+) site. Residues Cys-816, Cys-890, Cys-897, and Cys-900 each coordinate Zn(2+).

It belongs to the RNA polymerase beta' chain family. In terms of assembly, the RNAP catalytic core consists of 2 alpha, 1 beta, 1 beta' and 1 omega subunit. When a sigma factor is associated with the core the holoenzyme is formed, which can initiate transcription. The cofactor is Mg(2+). Requires Zn(2+) as cofactor.

The catalysed reaction is RNA(n) + a ribonucleoside 5'-triphosphate = RNA(n+1) + diphosphate. Its function is as follows. DNA-dependent RNA polymerase catalyzes the transcription of DNA into RNA using the four ribonucleoside triphosphates as substrates. In Neisseria meningitidis serogroup C (strain 053442), this protein is DNA-directed RNA polymerase subunit beta'.